Consider the following 314-residue polypeptide: MKKNPKISLIGSGNIGGTLAHLISLKKLGDIVLFDVSEGLPQGKALDLMQAATIEGSDIKIKGTNDYRDIEGSDAVIITAGLPRKPGMSRDDLISVNTKIMKDVAQNIKKYAQNAFVIVITNPLDIMVYVMLKESGLPHNKVIGMAGVLDSSRFNLFLAKEFKVSVKNVNSIVLGGHGDTMVPLLRYSTISGVPIPDLIKMGLSSNKNIEKIIDRTKNGGGEIVKLLKTGSAYYAPAASAIAMLESYLKDKRQILTCAAYLQGEYDIHDLYIGVPIIIGKEGVIKVIELQLTEEEKILFYKSVTEVKKLIDTIQ.

Residues 11-16 and Asp-35 each bind NAD(+); that span reads GSGNIG. Residues Arg-84 and Arg-90 each coordinate substrate. Residues Asn-97 and 120-122 each bind NAD(+); that span reads ITN. Substrate-binding residues include Asn-122 and Arg-153. His-177 serves as the catalytic Proton acceptor.

The protein belongs to the LDH/MDH superfamily. MDH type 3 family.

It catalyses the reaction (S)-malate + NAD(+) = oxaloacetate + NADH + H(+). Its function is as follows. Catalyzes the reversible oxidation of malate to oxaloacetate. This Rickettsia prowazekii (strain Madrid E) protein is Malate dehydrogenase.